Reading from the N-terminus, the 164-residue chain is Bacterial ferritin (164 aa).

In terms of domain architecture, Ferritin-like diiron spans 1–147 (MKGKKSVISR…QQLGLIARMG (147 aa)). Glutamate 18, glutamate 51, histidine 54, glutamate 94, glutamate 129, and histidine 132 together coordinate Fe cation.

Belongs to the bacterioferritin family. In terms of assembly, heterooligomer of 24 subunits, arranged as 12 dimers, that are packed together to form an approximately spherical molecule with a central cavity, in which large amounts of iron can be deposited.

The enzyme catalyses 4 Fe(2+) + O2 + 4 H(+) = 4 Fe(3+) + 2 H2O. It catalyses the reaction Fe(2+)(in) = Fe(2+)(out). Its function is as follows. Iron-storage protein, whose ferroxidase center binds Fe(2+), oxidizes it using dioxygen to Fe(3+), and participates in the subsequent Fe(3+) oxide mineral core formation within the central cavity of the BFR protein shell. The protein is Bacterial ferritin of Paramagnetospirillum magnetotacticum (Aquaspirillum magnetotacticum).